The sequence spans 723 residues: Nucleolar protein 11 (723 aa).

It is found in the nucleus. It localises to the nucleolus. Functionally, ribosome biogenesis factor. May be required for both optimal rDNA transcription and pre-rRNA processing. The polypeptide is Nucleolar protein 11 (NOL11) (Gallus gallus (Chicken)).